Reading from the N-terminus, the 306-residue chain is Homoserine O-succinyltransferase (306 aa).

The Acyl-thioester intermediate role is filled by C142. Substrate contacts are provided by K163 and S192. H233 (proton acceptor) is an active-site residue. E235 is an active-site residue. R247 provides a ligand contact to substrate.

Belongs to the MetA family.

The protein resides in the cytoplasm. The catalysed reaction is L-homoserine + succinyl-CoA = O-succinyl-L-homoserine + CoA. It functions in the pathway amino-acid biosynthesis; L-methionine biosynthesis via de novo pathway; O-succinyl-L-homoserine from L-homoserine: step 1/1. Functionally, transfers a succinyl group from succinyl-CoA to L-homoserine, forming succinyl-L-homoserine. In Pelagibacterium halotolerans (strain DSM 22347 / JCM 15775 / CGMCC 1.7692 / B2), this protein is Homoserine O-succinyltransferase.